The chain runs to 259 residues: Global transcriptional regulator CodY (259 aa).

Residues 1 to 155 (MNLLEKTRKI…GATVVGMEIL (155 aa)) form a GAF domain region. Residues 203-222 (ASKIADRVGITRSVIVNALR) constitute a DNA-binding region (H-T-H motif). Serine 215 is modified (phosphoserine).

Belongs to the CodY family.

It localises to the cytoplasm. In terms of biological role, DNA-binding global transcriptional regulator which is involved in the adaptive response to starvation and acts by directly or indirectly controlling the expression of numerous genes in response to nutrient availability. During rapid exponential growth, CodY is highly active and represses genes whose products allow adaptation to nutrient depletion. The polypeptide is Global transcriptional regulator CodY (Geobacillus thermodenitrificans (strain NG80-2)).